A 766-amino-acid chain; its full sequence is MAIAETDTEVHTPFEQDFEKDVAATQRYFDSSRFAGIIRLYTARQVVEQRGTIPVDHIVAREAAGAFYERLRELFAARKSITTFGPYSPGQAVSMKRMGIEAIYLGGWATSAKGSSTEDPGPDLASYPLSQVPDDAAVLVRALLTADRNQHYLRLQMSERQRAATPAYDFRPFIIADADTGHGGDPHVRNLIRRFVEVGVPGYHIEDQRPGTKKCGHQGGKVLVPSDEQIKRLNAARFQLDIMRVPGIIVARTDAEAANLIDSRADERDQPFLLGATKLDVPSYKSCFLAMVRRFYELGVKELNGHLLYALGDSEYAAAGGWLERQGIFGLVSDAVNAWREDGQQSIDGIFDQVESRFVAAWEDDAGLMTYGEAVADVLEFGQSEGEPIGMAPEEWRAFAARASLHAARAKAKELGADPPWDCELAKTPEGYYQIRGGIPYAIAKSLAAAPFADILWMETKTADLADARQFAEAIHAEFPDQMLAYNLSPSFNWDTTGMTDEEMRRFPEELGKMGFVFNFITYGGHQIDGVAAEEFATALRQDGMLALARLQRKMRLVESPYRTPQTLVGGPRSDAALAASSGRTATTKAMGKGSTQHQHLVQTEVPRKLLEEWLAMWSGHYQLKDKLRVQLRPQRAGSEVLELGIHGESDDKLANVIFQPIQDRRGRTILLVRDQNTFGAELRQKRLMTLIHLWLVHRFKAQAVHYVTPTDDNLYQTSKMKSHGIFTEVNQEVGEIIVAEVNHPRIAELLTPDRVALRKLITKEA.

Residue Gly-106–Trp-108 coordinates substrate. Position 177 (Asp-177) interacts with Mg(2+). Residue Cys-215 is the Proton acceptor of the active site. Residues Gly-216 to His-217, Arg-252, Asn-487 to Ser-491, and Thr-522 each bind substrate.

This sequence belongs to the isocitrate lyase/PEP mutase superfamily. Isocitrate lyase family. It depends on Mg(2+) as a cofactor.

The enzyme catalyses D-threo-isocitrate = glyoxylate + succinate. The protein operates within carbohydrate metabolism; glyoxylate cycle; (S)-malate from isocitrate: step 1/2. In terms of biological role, involved in the persistence and virulence of Mycobacterium. Catalyzes the reversible formation of succinate and glyoxylate from isocitrate, a key step of the glyoxylate cycle, which operates as an anaplerotic route for replenishing the tricarboxylic acid cycle during growth on fatty acid substrates. The chain is Isocitrate lyase 2 (aceA) from Mycobacterium bovis (strain ATCC BAA-935 / AF2122/97).